The following is a 586-amino-acid chain: 25S rRNA (adenine-N(1))-methyltransferase (586 aa).

Disordered stretches follow at residues 23–229 (GTAP…LTPL) and 536–573 (GKCVPKDGQEDTTKNKKGGQKPKPKFIEEKDEQEEVKD). Over residues 25-41 (APAAPAPASAPAVSSSK) the composition is skewed to low complexity. The span at 65–83 (LWEKVIEQKKEGVADGVKK) shows a compositional bias: basic and acidic residues. Polar residues predominate over residues 99-108 (KLSNSNNDGN). Residues 114-123 (NNKKKNKNKN) show a composition bias toward basic residues. The segment covering 144 to 163 (GEEDEDDNNDDADEWEGIDE) has biased composition (acidic residues). Over residues 164–182 (DEKHASSEKPTPKKDDKKQ) the composition is skewed to basic and acidic residues. Over residues 183–192 (QQLQQQQQQK) the composition is skewed to low complexity. Residues 204-213 (NGTTSNWQQD) show a composition bias toward polar residues. A compositionally biased stretch (low complexity) spans 217 to 229 (PKTATPAPKLTPL). The segment covering 539–549 (VPKDGQEDTTK) has biased composition (basic and acidic residues). Residues 550–559 (NKKGGQKPKP) show a composition bias toward basic residues.

This sequence belongs to the methyltransferase superfamily. RRP8 family.

It is found in the nucleus. The protein resides in the nucleolus. Its function is as follows. S-adenosyl-L-methionine-dependent methyltransferase that specifically methylates the N(1) position of a conserved adenine in helix 25.1 in 25S rRNA. Required both for ribosomal 40S and 60S subunits biogenesis. Required for efficient pre-rRNA cleavage at site A2. This Chaetomium thermophilum (strain DSM 1495 / CBS 144.50 / IMI 039719) (Thermochaetoides thermophila) protein is 25S rRNA (adenine-N(1))-methyltransferase (RPR8).